Reading from the N-terminus, the 176-residue chain is Peptide methionine sulfoxide reductase B3 (176 aa).

The first 26 residues, 1–26 (MNIVNSKILFLSFTLLLLLQSSIVES), serve as a signal peptide directing secretion. A MsrB domain is found at 51-172 (DEEWRAILSP…NSVSLKFTPA (122 aa)). Zn(2+) is bound by residues Cys90, Cys93, Cys136, and Cys139. Cys108 and Cys161 are oxidised to a cystine. The active-site Nucleophile is Cys161.

Belongs to the MsrB Met sulfoxide reductase family. It depends on Zn(2+) as a cofactor.

The protein localises to the endoplasmic reticulum. The enzyme catalyses L-methionyl-[protein] + [thioredoxin]-disulfide + H2O = L-methionyl-(R)-S-oxide-[protein] + [thioredoxin]-dithiol. Its function is as follows. Catalyzes the reduction of methionine sulfoxide (MetSO) to methionine in proteins. Plays a protective role against oxidative stress by restoring activity to proteins that have been inactivated by methionine oxidation. Involved in cold tolerance. Eliminates MetSO and reactive oxygen species that accumulate at the ER during cold acclimation. MSRB family specifically reduces the MetSO R-enantiomer. The polypeptide is Peptide methionine sulfoxide reductase B3 (MSRB3) (Arabidopsis thaliana (Mouse-ear cress)).